Reading from the N-terminus, the 183-residue chain is ATP synthase subunit b, chloroplastic (183 aa).

A helical transmembrane segment spans residues 25–45 (DILATNLINLTVVVGVLIFFG).

The protein belongs to the ATPase B chain family. In terms of assembly, F-type ATPases have 2 components, F(1) - the catalytic core - and F(0) - the membrane proton channel. F(1) has five subunits: alpha(3), beta(3), gamma(1), delta(1), epsilon(1). F(0) has four main subunits: a(1), b(1), b'(1) and c(10-14). The alpha and beta chains form an alternating ring which encloses part of the gamma chain. F(1) is attached to F(0) by a central stalk formed by the gamma and epsilon chains, while a peripheral stalk is formed by the delta, b and b' chains.

The protein resides in the plastid. The protein localises to the chloroplast thylakoid membrane. Functionally, f(1)F(0) ATP synthase produces ATP from ADP in the presence of a proton or sodium gradient. F-type ATPases consist of two structural domains, F(1) containing the extramembraneous catalytic core and F(0) containing the membrane proton channel, linked together by a central stalk and a peripheral stalk. During catalysis, ATP synthesis in the catalytic domain of F(1) is coupled via a rotary mechanism of the central stalk subunits to proton translocation. In terms of biological role, component of the F(0) channel, it forms part of the peripheral stalk, linking F(1) to F(0). The chain is ATP synthase subunit b, chloroplastic from Sorghum bicolor (Sorghum).